Here is a 123-residue protein sequence, read N- to C-terminus: Small ribosomal subunit protein bS16 (123 aa).

The disordered stretch occupies residues 87–123 (VKNNPVKAKPGKRAQERAAEKAQKVADAAAAAADAAE). Over residues 99 to 110 (RAQERAAEKAQK) the composition is skewed to basic and acidic residues. The span at 111 to 123 (VADAAAAAADAAE) shows a compositional bias: low complexity.

The protein belongs to the bacterial ribosomal protein bS16 family.

The protein is Small ribosomal subunit protein bS16 of Rhizobium johnstonii (strain DSM 114642 / LMG 32736 / 3841) (Rhizobium leguminosarum bv. viciae).